A 363-amino-acid chain; its full sequence is Ribonuclease D (363 aa).

In terms of domain architecture, 3'-5' exonuclease spans 5 to 168; that stretch reads ITHPSELTDR…AIHDELTRRL (164 aa). Residues 208–288 enclose the HRDC domain; that stretch reads EPAAQRRLLR…NTPLPDEEHA (81 aa).

It belongs to the RNase D family. The cofactor is a divalent metal cation.

It is found in the cytoplasm. It catalyses the reaction Exonucleolytic cleavage that removes extra residues from the 3'-terminus of tRNA to produce 5'-mononucleotides.. In terms of biological role, exonuclease involved in the 3' processing of various precursor tRNAs. Initiates hydrolysis at the 3'-terminus of an RNA molecule and releases 5'-mononucleotides. The sequence is that of Ribonuclease D from Xanthomonas oryzae pv. oryzae (strain KACC10331 / KXO85).